Consider the following 358-residue polypeptide: Methionine aminopeptidase 2 (358 aa).

Histidine 109 is a substrate binding site. A divalent metal cation contacts are provided by aspartate 130, aspartate 141, and histidine 210. Histidine 218 serves as a coordination point for substrate. Residues glutamate 243 and glutamate 339 each coordinate a divalent metal cation.

It belongs to the peptidase M24A family. Methionine aminopeptidase eukaryotic type 2 subfamily. Co(2+) serves as cofactor. Zn(2+) is required as a cofactor. It depends on Mn(2+) as a cofactor. The cofactor is Fe(2+).

It is found in the cytoplasm. The catalysed reaction is Release of N-terminal amino acids, preferentially methionine, from peptides and arylamides.. Functionally, cotranslationally removes the N-terminal methionine from nascent proteins. The N-terminal methionine is often cleaved when the second residue in the primary sequence is small and uncharged (Met-Ala-, Cys, Gly, Pro, Ser, Thr, or Val). In Encephalitozoon intestinalis (strain ATCC 50506) (Microsporidian parasite), this protein is Methionine aminopeptidase 2.